The chain runs to 40 residues: Photosystem II reaction center protein J (40 aa).

Residues 8-28 (IPLWIIGTVAGIPVIGLIGIF) traverse the membrane as a helical segment.

Belongs to the PsbJ family. In terms of assembly, PSII is composed of 1 copy each of membrane proteins PsbA, PsbB, PsbC, PsbD, PsbE, PsbF, PsbH, PsbI, PsbJ, PsbK, PsbL, PsbM, PsbT, PsbX, PsbY, PsbZ, Psb30/Ycf12, at least 3 peripheral proteins of the oxygen-evolving complex and a large number of cofactors. It forms dimeric complexes.

It is found in the plastid. It localises to the chloroplast thylakoid membrane. One of the components of the core complex of photosystem II (PSII). PSII is a light-driven water:plastoquinone oxidoreductase that uses light energy to abstract electrons from H(2)O, generating O(2) and a proton gradient subsequently used for ATP formation. It consists of a core antenna complex that captures photons, and an electron transfer chain that converts photonic excitation into a charge separation. The protein is Photosystem II reaction center protein J of Pelargonium hortorum (Common geranium).